Reading from the N-terminus, the 463-residue chain is Autophagy-related protein 36 (463 aa).

The RING-type; atypical zinc finger occupies 5-45; the sequence is CSICLEVLVDKEAFTEPCLHYYHNECIKEWTKRANTCPKCR. The PHD-type zinc finger occupies 85–131; the sequence is TNLCALCEDPSTSLIYCESCGGSFHFNCIGIGDELDSEWCCPLCGMF. Polar residues predominate over residues 229-242; the sequence is TQNSQSSEFSTENN. Residues 229–281 are disordered; sequence TQNSQSSEFSTENNVVPLKNTHELGRKLKKPRRASGIKKNVVERSSSHQSTQI. The span at 255–264 shows a compositional bias: basic residues; it reads KLKKPRRASG.

Interacts with ATG28.

Functionally, micropexophagy-specific protein required for efficient micropexophagic apparatus (MIPA) formation but not for general autophagy. In Komagataella phaffii (strain GS115 / ATCC 20864) (Yeast), this protein is Autophagy-related protein 36 (ATG35).